Consider the following 671-residue polypeptide: DNA ligase (671 aa).

Residues 32 to 36 (DAEYD), 81 to 82 (SL), and E113 contribute to the NAD(+) site. The N6-AMP-lysine intermediate role is filled by K115. Residues R136, E173, K290, and K314 each contribute to the NAD(+) site. The Zn(2+) site is built by C408, C411, C426, and C432. In terms of domain architecture, BRCT spans 593-671 (EIDSPFAGKT…EAEMIRLLGA (79 aa)).

Belongs to the NAD-dependent DNA ligase family. LigA subfamily. It depends on Mg(2+) as a cofactor. Requires Mn(2+) as cofactor.

It carries out the reaction NAD(+) + (deoxyribonucleotide)n-3'-hydroxyl + 5'-phospho-(deoxyribonucleotide)m = (deoxyribonucleotide)n+m + AMP + beta-nicotinamide D-nucleotide.. Its function is as follows. DNA ligase that catalyzes the formation of phosphodiester linkages between 5'-phosphoryl and 3'-hydroxyl groups in double-stranded DNA using NAD as a coenzyme and as the energy source for the reaction. It is essential for DNA replication and repair of damaged DNA. The protein is DNA ligase of Salmonella paratyphi A (strain ATCC 9150 / SARB42).